A 358-amino-acid chain; its full sequence is Protein RecA (358 aa).

66–73 contributes to the ATP binding site; that stretch reads GPESSGKT.

The protein belongs to the RecA family.

It localises to the cytoplasm. Its function is as follows. Can catalyze the hydrolysis of ATP in the presence of single-stranded DNA, the ATP-dependent uptake of single-stranded DNA by duplex DNA, and the ATP-dependent hybridization of homologous single-stranded DNAs. It interacts with LexA causing its activation and leading to its autocatalytic cleavage. The sequence is that of Protein RecA from Herpetosiphon aurantiacus (strain ATCC 23779 / DSM 785 / 114-95).